We begin with the raw amino-acid sequence, 558 residues long: Glucose-6-phosphate isomerase (558 aa).

Residue Lys-12 is modified to N6-acetyllysine. Ser-86 and Ser-107 each carry phosphoserine. Lys-142 is subject to N6-acetyllysine. 159-160 contributes to the D-glucose 6-phosphate binding site; that stretch reads GS. Ser-185 carries the phosphoserine; by CK2 modification. 210 to 215 is a binding site for D-glucose 6-phosphate; the sequence is SKTFTT. Thr-250 carries the phosphothreonine modification. D-glucose 6-phosphate contacts are provided by Gln-354, Glu-358, and His-389. Glu-358 functions as the Proton donor in the catalytic mechanism. The active site involves His-389. Residue Lys-454 is modified to N6-acetyllysine; alternate. Residue Lys-454 is modified to N6-malonyllysine; alternate. Lys-454 bears the N6-succinyllysine; alternate mark. Residue Ser-455 is modified to Phosphoserine. Lys-519 provides a ligand contact to D-glucose 6-phosphate. Residue Lys-519 is part of the active site.

Belongs to the GPI family. Homodimer; in the catalytically active form. Monomer in the secreted form. Post-translationally, phosphorylation at Ser-185 by CK2 has been shown to decrease enzymatic activity and may contribute to secretion by a non-classical secretory pathway. In terms of processing, ISGylated.

It is found in the cytoplasm. The protein resides in the secreted. It carries out the reaction alpha-D-glucose 6-phosphate = beta-D-fructose 6-phosphate. It functions in the pathway carbohydrate degradation; glycolysis; D-glyceraldehyde 3-phosphate and glycerone phosphate from D-glucose: step 2/4. In terms of biological role, in the cytoplasm, catalyzes the conversion of glucose-6-phosphate to fructose-6-phosphate, the second step in glycolysis, and the reverse reaction during gluconeogenesis. Besides it's role as a glycolytic enzyme, also acts as a secreted cytokine: acts as an angiogenic factor (AMF) that stimulates endothelial cell motility. Acts as a neurotrophic factor, neuroleukin, for spinal and sensory neurons. It is secreted by lectin-stimulated T-cells and induces immunoglobulin secretion. This chain is Glucose-6-phosphate isomerase, found in Cricetulus griseus (Chinese hamster).